Here is a 386-residue protein sequence, read N- to C-terminus: Hydrazine synthase subunit beta (386 aa).

The N-terminal stretch at 1 to 34 (MVIRRKMNKMIRKGMIGAVMLGAAVAISGGVATA) is a signal peptide.

Part of the hydrazine synthase complex that forms an elongated dimer of heterotrimers composed of one alpha, one beta and one gamma subunit.

The protein localises to the anammoxosome. It participates in nitrogen metabolism. In terms of biological role, component of the hydrazine synthase complex that catalyzes the condensation of nitric oxide (NO) with ammonium to form hydrazine. The beta subunit may play a role in modulating transport of the hydroxylamine intermediate through a tunnel between the gamma and alpha subunit's active site. Is involved in anaerobic ammonium oxidation (anammox), a biological process in which nitrite is used as the electron acceptor in the conversion of ammonium to dinitrogen gas (N2) and water; this bacterial process has a major role in the Earth's nitrogen cycle and has been estimated to synthesize up to 50% of the dinitrogen gas emitted into our atmosphere from the oceans. This Kuenenia stuttgartiensis protein is Hydrazine synthase subunit beta.